A 262-amino-acid polypeptide reads, in one-letter code: Urease accessory protein UreD (262 aa).

This sequence belongs to the UreD family. UreD, UreF and UreG form a complex that acts as a GTP-hydrolysis-dependent molecular chaperone, activating the urease apoprotein by helping to assemble the nickel containing metallocenter of UreC. The UreE protein probably delivers the nickel.

Its subcellular location is the cytoplasm. Required for maturation of urease via the functional incorporation of the urease nickel metallocenter. The chain is Urease accessory protein UreD from Acetivibrio thermocellus (strain ATCC 27405 / DSM 1237 / JCM 9322 / NBRC 103400 / NCIMB 10682 / NRRL B-4536 / VPI 7372) (Clostridium thermocellum).